Here is a 374-residue protein sequence, read N- to C-terminus: Tryptophan--tRNA ligase (374 aa).

A 'HIGH' region motif is present at residues 81–89 (PSGPVHIGH). A 'KMSKS' region motif is present at residues 258 to 262 (KMSAS).

Belongs to the class-I aminoacyl-tRNA synthetase family.

The protein localises to the cytoplasm. It catalyses the reaction tRNA(Trp) + L-tryptophan + ATP = L-tryptophyl-tRNA(Trp) + AMP + diphosphate + H(+). This chain is Tryptophan--tRNA ligase, found in Pyrobaculum arsenaticum (strain DSM 13514 / JCM 11321 / PZ6).